The chain runs to 214 residues: Alpha-S1-casein (214 aa).

A signal peptide spans 1 to 15; the sequence is MKLLILTCLVAVALA. Serine 27 is subject to Phosphoserine; in allele A. Phosphoserine; in allele C is present on serine 56. Residues serine 61 and serine 63 each carry the phosphoserine modification. The tract at residues 69 to 91 is disordered; the sequence is MEDAKQMKAGSSSSSEEIVPNSA. Residue serine 79 is modified to Phosphoserine; in alleles A and C. Serine 80 is modified (phosphoserine). Position 81 is a phosphoserine; in alleles A and C (serine 81). Serine 82 carries the post-translational modification Phosphoserine. Serine 83 carries the phosphoserine; in alleles A and C modification. Serine 90 carries the post-translational modification Phosphoserine. The tract at residues 105-111 is opioid-like peptide sequence; sequence RYLGYLE. Serine 130 is subject to Phosphoserine.

Belongs to the alpha-casein family. As to expression, mammary gland specific. Secreted in milk.

It is found in the secreted. Its function is as follows. Important role in the capacity of milk to transport calcium phosphate. The sequence is that of Alpha-S1-casein (CSN1S1) from Ovis aries (Sheep).